The sequence spans 511 residues: Cytochrome P450 705A5 (511 aa).

Residues 12 to 30 traverse the membrane as a helical segment; the sequence is CFIFLLLCLFSRLSYDLFF. A heme-binding site is contributed by cysteine 454.

Belongs to the cytochrome P450 family. Heme is required as a cofactor. In terms of tissue distribution, expressed primarily in the root epidermis.

The protein resides in the membrane. Functionally, converts thalian-diol to a desaturated thalian-diol. In Arabidopsis thaliana (Mouse-ear cress), this protein is Cytochrome P450 705A5 (CYP705A5).